A 475-amino-acid polypeptide reads, in one-letter code: Sulfate adenylyltransferase subunit 1 (475 aa).

The 215-residue stretch at 25 to 239 folds into the tr-type G domain; it reads KSLLRFLTCG…EVLETVEIQR (215 aa). A G1 region spans residues 34–41; sequence GSVDDGKS. 34–41 is a binding site for GTP; that stretch reads GSVDDGKS. Residues 92–96 are G2; the sequence is GITID. The G3 stretch occupies residues 113–116; that stretch reads DTPG. GTP is bound by residues 113 to 117 and 168 to 171; these read DTPGH and NKMD. The tract at residues 168 to 171 is G4; sequence NKMD. Positions 206 to 208 are G5; the sequence is SAL.

This sequence belongs to the TRAFAC class translation factor GTPase superfamily. Classic translation factor GTPase family. CysN/NodQ subfamily. In terms of assembly, heterodimer composed of CysD, the smaller subunit, and CysN.

It carries out the reaction sulfate + ATP + H(+) = adenosine 5'-phosphosulfate + diphosphate. The protein operates within sulfur metabolism; hydrogen sulfide biosynthesis; sulfite from sulfate: step 1/3. Functionally, with CysD forms the ATP sulfurylase (ATPS) that catalyzes the adenylation of sulfate producing adenosine 5'-phosphosulfate (APS) and diphosphate, the first enzymatic step in sulfur assimilation pathway. APS synthesis involves the formation of a high-energy phosphoric-sulfuric acid anhydride bond driven by GTP hydrolysis by CysN coupled to ATP hydrolysis by CysD. This is Sulfate adenylyltransferase subunit 1 from Citrobacter koseri (strain ATCC BAA-895 / CDC 4225-83 / SGSC4696).